The primary structure comprises 155 residues: Ribosomal RNA large subunit methyltransferase H (155 aa).

S-adenosyl-L-methionine-binding positions include leucine 72, glycine 103, and 122–127; that span reads LSPLTL.

This sequence belongs to the RNA methyltransferase RlmH family. As to quaternary structure, homodimer.

The protein localises to the cytoplasm. It carries out the reaction pseudouridine(1915) in 23S rRNA + S-adenosyl-L-methionine = N(3)-methylpseudouridine(1915) in 23S rRNA + S-adenosyl-L-homocysteine + H(+). In terms of biological role, specifically methylates the pseudouridine at position 1915 (m3Psi1915) in 23S rRNA. This Pasteurella multocida (strain Pm70) protein is Ribosomal RNA large subunit methyltransferase H.